The chain runs to 451 residues: Probable DNA polymerase delta small subunit (451 aa).

This sequence belongs to the DNA polymerase delta/II small subunit family. Heterodimer with subunits of 125 kDa and 50 kDa.

Its subcellular location is the nucleus. It carries out the reaction DNA(n) + a 2'-deoxyribonucleoside 5'-triphosphate = DNA(n+1) + diphosphate. Functionally, the function of the small subunit is not yet clear. This chain is Probable DNA polymerase delta small subunit, found in Caenorhabditis elegans.